The following is a 560-amino-acid chain: MGQPAPYAEGPIQGGDAGELCKCDFLVSISIPQTRSDIPAGARRSSMGPRSLDTCWGRGPERHVHRLECNGVIFTHRNLCLPGGKTKTENEEKTAQLNISKESESHRLIVEGLLMDVPQHPDFKDRLEKSQLHDTGNKTKIGDCTDLTVQDHESSTTEREEIARKLEESSVSTHLITKQGFAKEQVFYKCGECGSYYNPHSDFHLHQRVHTNEKPYTCKECGKTFRYNSKLSRHQKIHTGEKPYSCEECGQAFSQNSHLLQHQKLHGGQRPYECTDCGKTFSYNSKLIRHQRIHTGEKPFKCKECGKAFSCSYDCIIHERIHNGEKPYECKECGKSLSSNSVLIQHQRIHTGEKPYECKECGKAFHRSSVFLQHQRFHTGEQLYKCNECWKTFSCSSRFIVHQRIHNGEKPYECQECGKTFSQKITLVQHQRVHTGEKPYECKECGKAFRWNASFIQHQKWHTRKKLINGTGLSAVKPYCPCAILSPLPPQHTCSALAPPGPPLSSSHAVVLPPSVPFFLLLPSSEKANPSPVQIAHFFQDLAFPGKSSLQSPNPLSHSL.

10 C2H2-type zinc fingers span residues 188–210 (YKCGECGSYYNPHSDFHLHQRVH), 216–238 (YTCKECGKTFRYNSKLSRHQKIH), 244–266 (YSCEECGQAFSQNSHLLQHQKLH), 272–294 (YECTDCGKTFSYNSKLIRHQRIH), 300–322 (FKCKECGKAFSCSYDCIIHERIH), 328–350 (YECKECGKSLSSNSVLIQHQRIH), 356–378 (YECKECGKAFHRSSVFLQHQRFH), 384–406 (YKCNECWKTFSCSSRFIVHQRIH), 412–434 (YECQECGKTFSQKITLVQHQRVH), and 440–462 (YECKECGKAFRWNASFIQHQKWH).

The protein belongs to the krueppel C2H2-type zinc-finger protein family.

It is found in the nucleus. May be involved in transcriptional regulation. This chain is Zinc finger protein 619 (ZNF619), found in Homo sapiens (Human).